We begin with the raw amino-acid sequence, 499 residues long: Glycerol kinase (499 aa).

ADP is bound at residue Thr-13. ATP is bound by residues Thr-13, Thr-14, and Ser-15. Thr-13 lines the sn-glycerol 3-phosphate pocket. Arg-17 is an ADP binding site. The sn-glycerol 3-phosphate site is built by Arg-83, Glu-84, Tyr-135, and Asp-244. Glycerol-binding residues include Arg-83, Glu-84, Tyr-135, Asp-244, and Gln-245. ADP-binding residues include Thr-266 and Gly-309. ATP contacts are provided by Thr-266, Gly-309, Gln-313, and Gly-410. Gly-410 and Asn-414 together coordinate ADP.

The protein belongs to the FGGY kinase family.

The catalysed reaction is glycerol + ATP = sn-glycerol 3-phosphate + ADP + H(+). Its pathway is polyol metabolism; glycerol degradation via glycerol kinase pathway; sn-glycerol 3-phosphate from glycerol: step 1/1. With respect to regulation, inhibited by fructose 1,6-bisphosphate (FBP). Its function is as follows. Key enzyme in the regulation of glycerol uptake and metabolism. Catalyzes the phosphorylation of glycerol to yield sn-glycerol 3-phosphate. The sequence is that of Glycerol kinase from Paraburkholderia phytofirmans (strain DSM 17436 / LMG 22146 / PsJN) (Burkholderia phytofirmans).